A 214-amino-acid polypeptide reads, in one-letter code: Large ribosomal subunit protein bL25 (214 aa).

Residues 179-214 (VPPTQGPSEAEIEEVEAGDADTPEPEVVGEKEEDEE) form a disordered region. Residues 188-202 (AEIEEVEAGDADTPE) show a composition bias toward acidic residues.

The protein belongs to the bacterial ribosomal protein bL25 family. CTC subfamily. As to quaternary structure, part of the 50S ribosomal subunit; part of the 5S rRNA/L5/L18/L25 subcomplex. Contacts the 5S rRNA. Binds to the 5S rRNA independently of L5 and L18.

Its function is as follows. This is one of the proteins that binds to the 5S RNA in the ribosome where it forms part of the central protuberance. This chain is Large ribosomal subunit protein bL25, found in Staphylococcus carnosus (strain TM300).